Reading from the N-terminus, the 394-residue chain is uncharacterized protein (394 aa).

The next 12 membrane-spanning stretches (helical) occupy residues 13–35 (AIIG…VPVL), 50–72 (VGVA…GWLS), 79–97 (LIIN…IAWS), 107–129 (GRGL…ELVL), 136–158 (IMGL…SPII), 168–190 (FLIN…PASL), 218–240 (INLS…PVEL), 250–272 (VPEI…CICF), 277–299 (VLYS…GIFL), 309–331 (ILGL…ALVN), 344–366 (AIYS…ILFS), and 371–393 (FEVL…LYLI).

It belongs to the major facilitator superfamily.

It is found in the cell membrane. This is an uncharacterized protein from Buchnera aphidicola subsp. Baizongia pistaciae (strain Bp).